Reading from the N-terminus, the 778-residue chain is Lon protease (778 aa).

One can recognise a Lon N-terminal domain in the interval 6 to 207 (LPLMALRDMV…TVISMLNSNI (202 aa)). 356 to 363 (GPPGVGKT) is an ATP binding site. The 182-residue stretch at 592–773 (EDQIGSTTGL…DQVLKHALVG (182 aa)) folds into the Lon proteolytic domain. Active-site residues include Ser-679 and Lys-722.

It belongs to the peptidase S16 family. As to quaternary structure, homohexamer. Organized in a ring with a central cavity.

It is found in the cytoplasm. The catalysed reaction is Hydrolysis of proteins in presence of ATP.. In terms of biological role, ATP-dependent serine protease that mediates the selective degradation of mutant and abnormal proteins as well as certain short-lived regulatory proteins. Required for cellular homeostasis and for survival from DNA damage and developmental changes induced by stress. Degrades polypeptides processively to yield small peptide fragments that are 5 to 10 amino acids long. Binds to DNA in a double-stranded, site-specific manner. In Rickettsia conorii (strain ATCC VR-613 / Malish 7), this protein is Lon protease.